A 61-amino-acid chain; its full sequence is Small ribosomal subunit protein uS14 (61 aa).

Cysteine 24, cysteine 27, cysteine 40, and cysteine 43 together coordinate Zn(2+).

Belongs to the universal ribosomal protein uS14 family. Zinc-binding uS14 subfamily. As to quaternary structure, part of the 30S ribosomal subunit. Contacts proteins S3 and S10. Zn(2+) serves as cofactor.

Its function is as follows. Binds 16S rRNA, required for the assembly of 30S particles and may also be responsible for determining the conformation of the 16S rRNA at the A site. The chain is Small ribosomal subunit protein uS14 from Deinococcus geothermalis (strain DSM 11300 / CIP 105573 / AG-3a).